The chain runs to 209 residues: MITSNFKTQENVSQAITLASWLAGEYSSIKYTLEDARTNPHIRIFFRPLPYDFFGGIGFYSEEIYDHDPWHPHYQFVKRVIPQGDSVRVENYALKDPDLHTGAGQDLEILATLTPDNIELRKGCAMIFKRQGDTFVGGVEPGHKCLIPRGDGSMTYLVSEVKVTQKTWTSRDTGYDVNTHEKIWGSNSGPFKFDKVQDFSGEIPDIAIL.

The protein belongs to the CpcT/CpeT biliprotein lyase family.

Functionally, covalently attaches a chromophore to Cys residue(s) of phycobiliproteins. The protein is Chromophore lyase CpcT/CpeT 1 of Trichodesmium erythraeum (strain IMS101).